The chain runs to 120 residues: Large ribosomal subunit protein bL19 (120 aa).

This sequence belongs to the bacterial ribosomal protein bL19 family.

In terms of biological role, this protein is located at the 30S-50S ribosomal subunit interface and may play a role in the structure and function of the aminoacyl-tRNA binding site. The sequence is that of Large ribosomal subunit protein bL19 from Geobacillus kaustophilus (strain HTA426).